The primary structure comprises 202 residues: Guanylate kinase (202 aa).

The Guanylate kinase-like domain occupies 18–200; it reads LKPVVVFGPS…AYKQLEAICL (183 aa). Residue 25 to 32 coordinates ATP; that stretch reads GPSGVGKS.

Belongs to the guanylate kinase family.

It carries out the reaction GMP + ATP = GDP + ADP. Its function is as follows. Essential for recycling GMP and indirectly, cGMP. The sequence is that of Guanylate kinase from Schizosaccharomyces pombe (strain 972 / ATCC 24843) (Fission yeast).